Here is a 34-residue protein sequence, read N- to C-terminus: Photosystem II reaction center protein M (34 aa).

Residues 5–25 traverse the membrane as a helical segment; that stretch reads ILAFIATALFILVPTSFLLII.

Belongs to the PsbM family. PSII is composed of 1 copy each of membrane proteins PsbA, PsbB, PsbC, PsbD, PsbE, PsbF, PsbH, PsbI, PsbJ, PsbK, PsbL, PsbM, PsbT, PsbX, PsbY, PsbZ, Psb30/Ycf12, at least 3 peripheral proteins of the oxygen-evolving complex and a large number of cofactors. It forms dimeric complexes.

It is found in the plastid. The protein resides in the chloroplast thylakoid membrane. Functionally, one of the components of the core complex of photosystem II (PSII). PSII is a light-driven water:plastoquinone oxidoreductase that uses light energy to abstract electrons from H(2)O, generating O(2) and a proton gradient subsequently used for ATP formation. It consists of a core antenna complex that captures photons, and an electron transfer chain that converts photonic excitation into a charge separation. This subunit is found at the monomer-monomer interface. In Triticum aestivum (Wheat), this protein is Photosystem II reaction center protein M.